A 1749-amino-acid chain; its full sequence is Kinase non-catalytic C-lobe domain-containing protein 1 (1749 aa).

Residues 37 to 217 enclose the KIND 1 domain; it reads VSLADILSLR…QDVSESSWRE (181 aa). Disordered regions lie at residues 210–275 and 361–435; these read VSES…SHSR and CRLW…ARQL. Composition is skewed to basic and acidic residues over residues 363–373 and 410–430; these read LWPEQEPEHQL and ADPR…RIPE. The 165-residue stretch at 444–608 folds into the KIND 2 domain; it reads VSLQDLLSQL…RASICQVYQE (165 aa). 2 disordered regions span residues 689–871 and 962–1061; these read ARDQ…RPAD and QASP…GGAS. Positions 702-717 are enriched in basic and acidic residues; the sequence is ERGGQREGEGEEKLSL. Composition is skewed to low complexity over residues 739 to 748 and 766 to 779; these read QGAAPEPLGA and PANQ…AAPG. Residues 823–833 show a composition bias toward basic residues; sequence HGPRHPPKPPR. Positions 853-871 are enriched in basic and acidic residues; it reads GERDDQSPDSVPERPRPAD. Ser-964 is modified (phosphoserine). Residues 980–990 show a composition bias toward low complexity; that stretch reads SQSPRSPSSKR. Residues 1005–1019 show a composition bias toward polar residues; sequence RTSSRAPCSPTSVSD. Residues 1040 to 1056 show a composition bias toward basic and acidic residues; the sequence is VKAERAQQPEAGEDRRP. Residues 1133–1190 adopt a coiled-coil conformation; the sequence is QQLMMEKRNYRKTLKFYQKLLQKEKRNKGSDVKTMLSKLKGQLEEMKSRVQFLSLVKK. Positions 1246–1371 constitute an N-terminal Ras-GEF domain; it reads KARILQAGTP…HLLGLLEVGM (126 aa). The 252-residue stretch at 1468–1719 folds into the Ras-GEF domain; sequence STHQLFSQLT…SGADISTLAA (252 aa).

As to quaternary structure, interacts (via KIND2) with MAP2; the interaction enhances MAP2 phosphorylation and localizes KNDC1 to dendrites. Expressed specifically in the cerebral cortex.

The protein resides in the cell projection. It is found in the dendrite. It localises to the perikaryon. Functionally, RAS-Guanine nucleotide exchange factor (GEF) that controls the negative regulation of neuronal dendrite growth by mediating a signaling pathway linking RAS and MAP2. May be involved in cellular senescence. This Homo sapiens (Human) protein is Kinase non-catalytic C-lobe domain-containing protein 1.